A 441-amino-acid chain; its full sequence is Ribosomal protein uS12 methylthiotransferase RimO (441 aa).

One can recognise an MTTase N-terminal domain in the interval 8–118 (PKIGFVSLGC…VLQHVHHYVP (111 aa)). [4Fe-4S] cluster contacts are provided by cysteine 17, cysteine 53, cysteine 82, cysteine 150, cysteine 154, and cysteine 157. The 238-residue stretch at 136-373 (LTPRHYAYLK…MALQQQISAE (238 aa)) folds into the Radical SAM core domain. Residues 376-441 (QEKVGREILV…DEYDLWGSLV (66 aa)) enclose the TRAM domain.

Belongs to the methylthiotransferase family. RimO subfamily. It depends on [4Fe-4S] cluster as a cofactor.

The protein resides in the cytoplasm. It catalyses the reaction L-aspartate(89)-[ribosomal protein uS12]-hydrogen + (sulfur carrier)-SH + AH2 + 2 S-adenosyl-L-methionine = 3-methylsulfanyl-L-aspartate(89)-[ribosomal protein uS12]-hydrogen + (sulfur carrier)-H + 5'-deoxyadenosine + L-methionine + A + S-adenosyl-L-homocysteine + 2 H(+). Its function is as follows. Catalyzes the methylthiolation of an aspartic acid residue of ribosomal protein uS12. This is Ribosomal protein uS12 methylthiotransferase RimO from Cronobacter sakazakii (strain ATCC BAA-894) (Enterobacter sakazakii).